The following is a 466-amino-acid chain: Adenosylhomocysteinase (466 aa).

Substrate-binding residues include Thr57, Asp132, and Glu192. 193 to 195 (TTT) lines the NAD(+) pocket. 2 residues coordinate substrate: Lys222 and Asp226. Residues Asn227, 256-261 (GYGDVG), Glu279, Asn314, 335-337 (IGH), and Asn380 contribute to the NAD(+) site.

Belongs to the adenosylhomocysteinase family. Requires NAD(+) as cofactor.

The protein localises to the cytoplasm. The enzyme catalyses S-adenosyl-L-homocysteine + H2O = L-homocysteine + adenosine. The protein operates within amino-acid biosynthesis; L-homocysteine biosynthesis; L-homocysteine from S-adenosyl-L-homocysteine: step 1/1. May play a key role in the regulation of the intracellular concentration of adenosylhomocysteine. The polypeptide is Adenosylhomocysteinase (Brucella melitensis biotype 2 (strain ATCC 23457)).